The sequence spans 146 residues: Large ribosomal subunit protein uL15 (146 aa).

Basic and acidic residues predominate over residues 1-10 (MTIKLHDLKP). The segment at 1-52 (MTIKLHDLKPARGSKTPRTRVGRGEGSKGKTAGRGTKGTKARKNVPVTFEGG) is disordered.

The protein belongs to the universal ribosomal protein uL15 family. Part of the 50S ribosomal subunit.

In terms of biological role, binds to the 23S rRNA. In Mycolicibacterium paratuberculosis (strain ATCC BAA-968 / K-10) (Mycobacterium paratuberculosis), this protein is Large ribosomal subunit protein uL15.